Consider the following 309-residue polypeptide: MASPVTVLENPIPKSGQHLLFFLTSKQQLALEQRPIESSLGYSAYVDHGVSQGVIVNPSSIAAAMRSSLITVYGITKPGTDKQYISVISPTYNLIANRQNQPIETTQKALAACSDNDRNNWVYYLNLPQGTAQYAIYELNIQDSTSAPTVYSGPTPSGNSNLAAVYFSPNKDRFIIFSNTDTRHYLYWVNSTLQSGNRIAGTGSVMSASPLAATTITNVQTRSMTIFLYYMDVNTLLNRIVGKVTDNEVHWYANQVVEGAPPMKVDTLLTGVVVEEKWNCLYYIPDGDTEFRAFNDTIRDSFFDEPREG.

N-linked (GlcNAc...) asparagine glycans are attached at residues asparagine 190 and asparagine 295.

It is found in the secreted. Its subcellular location is the cell wall. The protein resides in the membrane. Its function is as follows. May participate in wall plasticization and/or intussusception or in cell wall turnover. In Coccidioides posadasii (strain RMSCC 757 / Silveira) (Valley fever fungus), this protein is Wall-associated proteinase.